The chain runs to 125 residues: MAVCIIDHDNIRGVIYFEPVHGKDKVLGSVIGLKSGTYSLIIHRYGDISRGCDSIDSPEIFIGNIFVNRYGVAYVYLDTDVNISTIIGKALSISKNDQRLACGVIGISFINEKIIHFLTINENGV.

Cysteine 52 and cysteine 102 are joined by a disulfide.

Belongs to the Cu-Zn superoxide dismutase family.

The protein localises to the host cytoplasm. Functionally, virion protein with no enzymatic activity. The protein is Cu-Zn superoxide dismutase-like protein of Mus musculus (Mouse).